A 130-amino-acid chain; its full sequence is MSKTIKRIGSRRNEHRVLKGVIYVQASFNNTIVTATDVRGQVISWSSAGACGFKGTRRGTPFAAQTAAENVIRTLMDRGIGRVEVMISGPGRGRDTALRTIRRSGILLSFVRDVTPMPHNGCRPPKKRRV.

It belongs to the universal ribosomal protein uS11 family. In terms of assembly, part of the 30S ribosomal subunit.

The protein resides in the plastid. Its subcellular location is the chloroplast. In Pinus koraiensis (Korean pine), this protein is Small ribosomal subunit protein uS11c.